Reading from the N-terminus, the 165-residue chain is Small ribosomal subunit protein bS16 (165 aa).

The disordered stretch occupies residues 110–165; the sequence is LSEANNGPTAEAITEKKKKAREDKEAKEAAEKAAAEKAAAAESEEAPAEEAAAEEA. Positions 129–144 are enriched in basic and acidic residues; that stretch reads AREDKEAKEAAEKAAA. Positions 151-165 are enriched in acidic residues; the sequence is ESEEAPAEEAAAEEA.

This sequence belongs to the bacterial ribosomal protein bS16 family.

The sequence is that of Small ribosomal subunit protein bS16 from Corynebacterium glutamicum (strain R).